The primary structure comprises 560 residues: Solute carrier family 49 member A3 (560 aa).

The next 12 helical transmembrane spans lie at 30–50 (WVFL…WLSF), 70–90 (WLSL…IWIL), 100–120 (ILGA…CMVV), 125–145 (PFAF…LVIF), 166–186 (LATM…PVLV), 192–212 (IPLM…LSTI), 250–270 (VILA…SALL), 282–302 (GFSG…ALAL), 318–338 (IGLC…QLQG), 341–361 (LALA…GPVA), 379–399 (GMIF…MTAL), and 422–442 (VSLL…AVFF). Positions 451-540 (AESGEPPSTR…PGRLAGRVQA (90 aa)) are disordered. A compositionally biased stretch (gly residues) spans 466 to 481 (ADSGPGVDRGGAGRAG).

It belongs to the major facilitator superfamily.

It localises to the membrane. This Homo sapiens (Human) protein is Solute carrier family 49 member A3.